Consider the following 520-residue polypeptide: Keratin, type II cytoskeletal 72 (520 aa).

Positions 1–133 (MSRQLTLYPG…DPEIQKVRAQ (133 aa)) are head. The coil 1A stretch occupies residues 134–169 (EREQIKALNNKFASFIDKVRFLEQQNQVLETKWELL). Residues 134–447 (EREQIKALNN…KLLESEESRM (314 aa)) enclose the IF rod domain. The interval 170–188 (QQLDLNNSKRSLEPVHESY) is linker 1. The interval 189–280 (ISNLQKQLEI…VLFEGEIAQM (92 aa)) is coil 1B. Residues 281-304 (QSHISDTSVILSMDNNRQLDLDSI) are linker 12. The segment at 305–443 (LAEVRAQYEE…ATYRKLLESE (139 aa)) is coil 2. Residues 444-520 (ESRMAGEYPN…SSGTTKKTSR (77 aa)) are tail. The tract at residues 494–520 (KGSCGSELKDPPAKTSGSSGTTKKTSR) is disordered. Low complexity predominate over residues 507 to 520 (KTSGSSGTTKKTSR).

This sequence belongs to the intermediate filament family. In terms of assembly, heterotetramer of two type I and two type II keratins.

Has a role in hair formation. Specific component of keratin intermediate filaments in the inner root sheath (IRS) of the hair follicle. This Mus musculus (Mouse) protein is Keratin, type II cytoskeletal 72 (Krt72).